A 275-amino-acid polypeptide reads, in one-letter code: 1-deoxy-11-beta-hydroxypentalenate dehydrogenase (275 aa).

Position 12–36 (12–36 (GAASGIGLALSARFARAGAGVVMAD)) interacts with NAD(+). Ser-144 lines the substrate pocket. Tyr-157 (proton acceptor) is an active-site residue. An NAD(+)-binding site is contributed by Lys-161.

Belongs to the short-chain dehydrogenases/reductases (SDR) family.

It catalyses the reaction 1-deoxy-11beta-hydroxypentalenate + NAD(+) = 1-deoxy-11-oxopentalenate + NADH + H(+). The protein operates within antibiotic biosynthesis; pentalenolactone biosynthesis. Catalyzes the oxidation of 1-deoxy-11-beta-hydroxypentalenic acid to 1-deoxy-11-oxopentalenic acid in the biosynthesis of pentalenolactone antibiotic. The chain is 1-deoxy-11-beta-hydroxypentalenate dehydrogenase (penF) from Streptomyces exfoliatus (Streptomyces hydrogenans).